Here is a 266-residue protein sequence, read N- to C-terminus: Dihydropteroate synthase (266 aa).

A Pterin-binding domain is found at 12–260 (AAIMGILNVT…DVKANQDIVA (249 aa)). Asn19 serves as a coordination point for Mg(2+). Residues Thr59, Asp93, Asn112, Asp176, Lys212, and 248 to 250 (RVH) contribute to the (7,8-dihydropterin-6-yl)methyl diphosphate site.

It belongs to the DHPS family. Homodimer or homotrimer. It depends on Mg(2+) as a cofactor.

The enzyme catalyses (7,8-dihydropterin-6-yl)methyl diphosphate + 4-aminobenzoate = 7,8-dihydropteroate + diphosphate. It functions in the pathway cofactor biosynthesis; tetrahydrofolate biosynthesis; 7,8-dihydrofolate from 2-amino-4-hydroxy-6-hydroxymethyl-7,8-dihydropteridine diphosphate and 4-aminobenzoate: step 1/2. Catalyzes the condensation of para-aminobenzoate (pABA) with 6-hydroxymethyl-7,8-dihydropterin diphosphate (DHPt-PP) to form 7,8-dihydropteroate (H2Pte), the immediate precursor of folate derivatives. This Streptococcus pyogenes serotype M6 (strain ATCC BAA-946 / MGAS10394) protein is Dihydropteroate synthase (folP).